A 282-amino-acid chain; its full sequence is Shikimate kinase (282 aa).

86–96 lines the ATP pocket; the sequence is PIKSGLSSSSA.

This sequence belongs to the GHMP kinase family. Archaeal shikimate kinase subfamily.

The protein resides in the cytoplasm. The enzyme catalyses shikimate + ATP = 3-phosphoshikimate + ADP + H(+). It participates in metabolic intermediate biosynthesis; chorismate biosynthesis; chorismate from D-erythrose 4-phosphate and phosphoenolpyruvate: step 5/7. This is Shikimate kinase (aroK) from Methanocaldococcus jannaschii (strain ATCC 43067 / DSM 2661 / JAL-1 / JCM 10045 / NBRC 100440) (Methanococcus jannaschii).